The primary structure comprises 125 residues: Photosystem I reaction center subunit IV, chloroplastic (125 aa).

A chloroplast-targeting transit peptide spans 1–34; sequence MASIASSVAVRLGLTQVLPNKNFSSPRSTRLVVR. The segment covering 42–57 has biased composition (low complexity); the sequence is APAAASPEGEAPKAAA. Residues 42 to 68 are disordered; the sequence is APAAASPEGEAPKAAAKPPPIGPKRGS.

The protein belongs to the PsaE family.

The protein resides in the plastid. Its subcellular location is the chloroplast thylakoid membrane. Its function is as follows. Stabilizes the interaction between PsaC and the PSI core, assists the docking of the ferredoxin to PSI and interacts with ferredoxin-NADP oxidoreductase. The protein is Photosystem I reaction center subunit IV, chloroplastic (PSAE-1) of Spinacia oleracea (Spinach).